Consider the following 117-residue polypeptide: Ribosome-binding factor A (117 aa).

This sequence belongs to the RbfA family. In terms of assembly, monomer. Binds 30S ribosomal subunits, but not 50S ribosomal subunits or 70S ribosomes.

Its subcellular location is the cytoplasm. Functionally, one of several proteins that assist in the late maturation steps of the functional core of the 30S ribosomal subunit. Associates with free 30S ribosomal subunits (but not with 30S subunits that are part of 70S ribosomes or polysomes). Required for efficient processing of 16S rRNA. May interact with the 5'-terminal helix region of 16S rRNA. This Leuconostoc mesenteroides subsp. mesenteroides (strain ATCC 8293 / DSM 20343 / BCRC 11652 / CCM 1803 / JCM 6124 / NCDO 523 / NBRC 100496 / NCIMB 8023 / NCTC 12954 / NRRL B-1118 / 37Y) protein is Ribosome-binding factor A.